The following is a 171-amino-acid chain: Transcription factor E (171 aa).

An HTH TFE/IIEalpha-type domain is found at 1–81; it reads MLNLAKELVG…YWKVNVNQIN (81 aa).

The protein belongs to the TFE family. As to quaternary structure, monomer. Interaction with RNA polymerase subunits RpoF and RpoE is necessary for Tfe stimulatory transcription activity. Able to interact with Tbp and RNA polymerase in the absence of DNA promoter. Interacts both with the preinitiation and elongation complexes.

Transcription factor that plays a role in the activation of archaeal genes transcribed by RNA polymerase. Facilitates transcription initiation by enhancing TATA-box recognition by TATA-box-binding protein (Tbp), and transcription factor B (Tfb) and RNA polymerase recruitment. Not absolutely required for transcription in vitro, but particularly important in cases where Tbp or Tfb function is not optimal. It dynamically alters the nucleic acid-binding properties of RNA polymerases by stabilizing the initiation complex and destabilizing elongation complexes. Seems to translocate with the RNA polymerase following initiation and acts by binding to the non template strand of the transcription bubble in elongation complexes. The polypeptide is Transcription factor E (Sulfolobus acidocaldarius (strain ATCC 33909 / DSM 639 / JCM 8929 / NBRC 15157 / NCIMB 11770)).